The following is a 278-amino-acid chain: Probable velvet family sexual development regulator SCHCODRAFT_28806 (278 aa).

Residues 51-255 (GRTIRASLDE…ARVGVRLSVR (205 aa)) enclose the Velvet domain. A disordered region spans residues 257–278 (TGKKATTKRRKRSDSFDEDDSS).

Belongs to the velvet family.

Its subcellular location is the nucleus. Functionally, velvet-domain-containing protein that probably acts as a positive regulator of sexual development. This chain is Probable velvet family sexual development regulator SCHCODRAFT_28806, found in Schizophyllum commune (strain H4-8 / FGSC 9210) (Split gill fungus).